A 391-amino-acid polypeptide reads, in one-letter code: 1-deoxy-D-xylulose 5-phosphate reductoisomerase (391 aa).

Residue Asn-109 participates in NADPH binding. A 1-deoxy-D-xylulose 5-phosphate-binding site is contributed by Lys-110. Glu-111 serves as a coordination point for NADPH. Asp-135 contributes to the Mn(2+) binding site. Positions 136, 137, 171, and 194 each coordinate 1-deoxy-D-xylulose 5-phosphate. Glu-137 is a binding site for Mn(2+). Gly-200 provides a ligand contact to NADPH. 1-deoxy-D-xylulose 5-phosphate-binding residues include Ser-207, Asn-212, Arg-213, and Glu-216. Glu-216 contacts Mn(2+).

This sequence belongs to the DXR family. As to quaternary structure, homodimer. Mg(2+) is required as a cofactor. The cofactor is Mn(2+).

It carries out the reaction 2-C-methyl-D-erythritol 4-phosphate + NADP(+) = 1-deoxy-D-xylulose 5-phosphate + NADPH + H(+). It functions in the pathway isoprenoid biosynthesis; isopentenyl diphosphate biosynthesis via DXP pathway; isopentenyl diphosphate from 1-deoxy-D-xylulose 5-phosphate: step 1/6. Functionally, catalyzes the NADPH-dependent rearrangement and reduction of 1-deoxy-D-xylulose-5-phosphate (DXP) to 2-C-methyl-D-erythritol 4-phosphate (MEP). This chain is 1-deoxy-D-xylulose 5-phosphate reductoisomerase, found in Blochmanniella floridana.